Consider the following 260-residue polypeptide: Snake venom serine protease homolog 1 (260 aa).

The N-terminal stretch at 1–18 (MVLIRVLANLLILQLSYA) is a signal peptide. The propeptide occupies 19–24 (QKSSEL). One can recognise a Peptidase S1 domain in the interval 25-251 (IIGGDECNIN…HLDWIKSIIA (227 aa)). Cystine bridges form between cysteine 31–cysteine 165, cysteine 52–cysteine 68, cysteine 100–cysteine 258, cysteine 144–cysteine 212, cysteine 176–cysteine 191, and cysteine 202–cysteine 227. N-linked (GlcNAc...) asparagine glycans are attached at residues asparagine 83, asparagine 123, and asparagine 124.

Belongs to the peptidase S1 family. Snake venom subfamily. As to expression, expressed by the venom gland.

The protein localises to the secreted. Functionally, snake venom serine protease homolog that may act in the hemostasis system of the prey. The sequence is that of Snake venom serine protease homolog 1 from Trimeresurus stejnegeri (Chinese green tree viper).